We begin with the raw amino-acid sequence, 55 residues long: MAFTLLFGAGVSGDVATASAVGMIGSFLAAAALIVVPAASFLLWVSQKDALERGR.

Residues 24 to 44 (IGSFLAAAALIVVPAASFLLW) form a helical membrane-spanning segment.

It belongs to the PsbX family. Type 2 subfamily. As to quaternary structure, PSII consists of a core antenna complex that captures photons, and an electron transfer chain that converts photonic excitation into a charge separation. PSII forms dimeric complexes.

It localises to the cellular thylakoid membrane. Its function is as follows. Involved in the binding and/or turnover of quinones at the Q(B) site of Photosystem II. The sequence is that of Photosystem II reaction center X protein from Prochlorococcus marinus (strain SARG / CCMP1375 / SS120).